A 162-amino-acid chain; its full sequence is Transcriptional repressor NrdR (162 aa).

The disordered stretch occupies residues 1–21 (MNCPDCGNGRTRVIDTGASSD). Residues 3–34 (CPDCGNGRTRVIDTGASSDGASVRRRRECQRC) fold into a zinc finger. Residues 49–139 (LQVKKRDGTI…VYKAFSEPQE (91 aa)) form the ATP-cone domain.

Belongs to the NrdR family. It depends on Zn(2+) as a cofactor.

Functionally, negatively regulates transcription of bacterial ribonucleotide reductase nrd genes and operons by binding to NrdR-boxes. This Natronomonas pharaonis (strain ATCC 35678 / DSM 2160 / CIP 103997 / JCM 8858 / NBRC 14720 / NCIMB 2260 / Gabara) (Halobacterium pharaonis) protein is Transcriptional repressor NrdR.